We begin with the raw amino-acid sequence, 355 residues long: dTDP-D-glucose 4,6-dehydratase (355 aa).

Substrate is bound at residue threonine 142. The active-site Proton donor is the aspartate 143. Residues glutamate 144 and tyrosine 166 each act as proton acceptor in the active site.

Belongs to the NAD(P)-dependent epimerase/dehydratase family. dTDP-glucose dehydratase subfamily. It depends on NAD(+) as a cofactor.

The catalysed reaction is dTDP-alpha-D-glucose = dTDP-4-dehydro-6-deoxy-alpha-D-glucose + H2O. In Mus musculus (Mouse), this protein is dTDP-D-glucose 4,6-dehydratase (Tgds).